A 1241-amino-acid chain; its full sequence is DNA-directed RNA polymerase subunit beta (1241 aa).

Belongs to the RNA polymerase beta chain family. In terms of assembly, the RNAP catalytic core consists of 2 alpha, 1 beta, 1 beta' and 1 omega subunit. When a sigma factor is associated with the core the holoenzyme is formed, which can initiate transcription.

It catalyses the reaction RNA(n) + a ribonucleoside 5'-triphosphate = RNA(n+1) + diphosphate. DNA-dependent RNA polymerase catalyzes the transcription of DNA into RNA using the four ribonucleoside triphosphates as substrates. This chain is DNA-directed RNA polymerase subunit beta, found in Clostridium botulinum (strain Alaska E43 / Type E3).